A 189-amino-acid polypeptide reads, in one-letter code: GTP cyclohydrolase 1 (189 aa).

3 residues coordinate Zn(2+): C78, H81, and C150.

Belongs to the GTP cyclohydrolase I family. As to quaternary structure, homomer.

It carries out the reaction GTP + H2O = 7,8-dihydroneopterin 3'-triphosphate + formate + H(+). Its pathway is cofactor biosynthesis; 7,8-dihydroneopterin triphosphate biosynthesis; 7,8-dihydroneopterin triphosphate from GTP: step 1/1. The sequence is that of GTP cyclohydrolase 1 from Listeria monocytogenes serotype 4a (strain HCC23).